A 303-amino-acid chain; its full sequence is N-acetylmuramic acid 6-phosphate etherase (303 aa).

The segment at 1–21 is disordered; the sequence is MQPSQLRSLTTESRNPNTMGI. Positions 58 to 221 constitute an SIS domain; that stretch reads AYDSISNGGR…STSVMIRQGK (164 aa). The Proton donor role is filled by Glu-86. Glu-117 is a catalytic residue.

Belongs to the GCKR-like family. MurNAc-6-P etherase subfamily. As to quaternary structure, homodimer.

It carries out the reaction N-acetyl-D-muramate 6-phosphate + H2O = N-acetyl-D-glucosamine 6-phosphate + (R)-lactate. The protein operates within amino-sugar metabolism; N-acetylmuramate degradation. In terms of biological role, specifically catalyzes the cleavage of the D-lactyl ether substituent of MurNAc 6-phosphate, producing GlcNAc 6-phosphate and D-lactate. This Bacillus pumilus (strain SAFR-032) protein is N-acetylmuramic acid 6-phosphate etherase.